A 173-amino-acid polypeptide reads, in one-letter code: Ribosome maturation factor RimM (173 aa).

The region spanning 96–169 (PDEFYDHQLE…LITIDPPDGL (74 aa)) is the PRC barrel domain.

Belongs to the RimM family. In terms of assembly, binds ribosomal protein uS19.

The protein resides in the cytoplasm. An accessory protein needed during the final step in the assembly of 30S ribosomal subunit, possibly for assembly of the head region. Essential for efficient processing of 16S rRNA. May be needed both before and after RbfA during the maturation of 16S rRNA. It has affinity for free ribosomal 30S subunits but not for 70S ribosomes. The polypeptide is Ribosome maturation factor RimM (Mycolicibacterium gilvum (strain PYR-GCK) (Mycobacterium gilvum (strain PYR-GCK))).